A 796-amino-acid chain; its full sequence is Probable phosphoketolase (796 aa).

It belongs to the XFP family. Thiamine diphosphate serves as cofactor.

The chain is Probable phosphoketolase from Clostridium acetobutylicum (strain ATCC 824 / DSM 792 / JCM 1419 / IAM 19013 / LMG 5710 / NBRC 13948 / NRRL B-527 / VKM B-1787 / 2291 / W).